A 368-amino-acid polypeptide reads, in one-letter code: tRNA/tmRNA (uracil-C(5))-methyltransferase (368 aa).

Residues Gln-190, Tyr-218, Asn-223, Glu-239, and Asp-301 each coordinate S-adenosyl-L-methionine. Cys-326 acts as the Nucleophile in catalysis. Residue Glu-360 is the Proton acceptor of the active site.

The protein belongs to the class I-like SAM-binding methyltransferase superfamily. RNA M5U methyltransferase family. TrmA subfamily.

The enzyme catalyses uridine(54) in tRNA + S-adenosyl-L-methionine = 5-methyluridine(54) in tRNA + S-adenosyl-L-homocysteine + H(+). It carries out the reaction uridine(341) in tmRNA + S-adenosyl-L-methionine = 5-methyluridine(341) in tmRNA + S-adenosyl-L-homocysteine + H(+). Functionally, dual-specificity methyltransferase that catalyzes the formation of 5-methyluridine at position 54 (m5U54) in all tRNAs, and that of position 341 (m5U341) in tmRNA (transfer-mRNA). This is tRNA/tmRNA (uracil-C(5))-methyltransferase from Aliivibrio salmonicida (strain LFI1238) (Vibrio salmonicida (strain LFI1238)).